Here is a 486-residue protein sequence, read N- to C-terminus: MAIAEWRQQLKLGEVSARELTDHQLARIAVVDPTLHAFLDITADRARADADRIDEALAAGESLPPLAGVPLAIKDNLCTKGIRTTCSSRMLETFVPPYESTVTERLWQAGAVLLGKTNLDEFAMGSSTETSAFGATSNPWDISRVPGGSSGGSAAAVAAGECMAALGSDTGGSIRQPASFCGVVGLKPTYGRVSRWGLVAFASSLDQVGPFTTNVADAAELLQVIAGSDPRDSTCLNVAVPDYCSALSQPMSGVRIGLIRECFDQNGLDAQVKRTVLTAAEKLQSLGAELVEVSCPRFSDGIATYYVIAPSEASANLARYDGVKYGYRAEGADALAAMTARSRAEGFGSEVQRRILIGTYALSAGYMDAYYKKAQQVRTLIRQDFDAAFQTVDVLLTPTSPTTAFKAGAHADDPLAMYLADLLTIPANLAGLPAISLPCGFDDDGLPIGVQLIANVLEESRLLQVAFHYEQAANVMANHPQGNFIP.

Active-site charge relay system residues include K74 and S149. The Acyl-ester intermediate role is filled by S173.

It belongs to the amidase family. GatA subfamily. Heterotrimer of A, B and C subunits.

It carries out the reaction L-glutamyl-tRNA(Gln) + L-glutamine + ATP + H2O = L-glutaminyl-tRNA(Gln) + L-glutamate + ADP + phosphate + H(+). Allows the formation of correctly charged Gln-tRNA(Gln) through the transamidation of misacylated Glu-tRNA(Gln) in organisms which lack glutaminyl-tRNA synthetase. The reaction takes place in the presence of glutamine and ATP through an activated gamma-phospho-Glu-tRNA(Gln). The chain is Glutamyl-tRNA(Gln) amidotransferase subunit A from Prochlorococcus marinus (strain MIT 9313).